The primary structure comprises 428 residues: D-amino acid dehydrogenase (428 aa).

3–17 provides a ligand contact to FAD; it reads VVILGSGVVGVASAY.

The protein belongs to the DadA oxidoreductase family. It depends on FAD as a cofactor.

The catalysed reaction is a D-alpha-amino acid + A + H2O = a 2-oxocarboxylate + AH2 + NH4(+). It participates in amino-acid degradation; D-alanine degradation; NH(3) and pyruvate from D-alanine: step 1/1. Functionally, oxidative deamination of D-amino acids. This Burkholderia cenocepacia (strain HI2424) protein is D-amino acid dehydrogenase.